An 828-amino-acid chain; its full sequence is Periplasmic nitrate reductase (828 aa).

The segment at residues 1–31 (MKLSRRSFMKANAVAAVAAAAGLSVPGVARA) is a signal peptide (tat-type signal). The 4Fe-4S Mo/W bis-MGD-type domain occupies 39-95 (IKWDKAPCRFCGTGCGVLVGTQQGRVVACQGDPDAPVNRGLNCIKGYFLPKIMYGKD). Positions 46, 49, 53, and 81 each coordinate [4Fe-4S] cluster. Residues Lys83, Gln150, Asn175, Cys179, 212 to 219 (WGANMAEM), 243 to 247 (STYQH), 262 to 264 (QSD), Met372, Gln376, Asn482, 508 to 509 (SD), Lys531, Asp558, and 718 to 727 (TGRVLEHWHT) each bind Mo-bis(molybdopterin guanine dinucleotide). Phe794 is a substrate binding site. Mo-bis(molybdopterin guanine dinucleotide)-binding residues include Asn802 and Lys819.

Belongs to the prokaryotic molybdopterin-containing oxidoreductase family. NasA/NapA/NarB subfamily. As to quaternary structure, component of the periplasmic nitrate reductase NapAB complex composed of NapA and NapB. Requires [4Fe-4S] cluster as cofactor. Mo-bis(molybdopterin guanine dinucleotide) is required as a cofactor. Post-translationally, predicted to be exported by the Tat system. The position of the signal peptide cleavage has not been experimentally proven.

The protein resides in the periplasm. It carries out the reaction 2 Fe(II)-[cytochrome] + nitrate + 2 H(+) = 2 Fe(III)-[cytochrome] + nitrite + H2O. Catalytic subunit of the periplasmic nitrate reductase complex NapAB. Receives electrons from NapB and catalyzes the reduction of nitrate to nitrite. This Shigella boydii serotype 4 (strain Sb227) protein is Periplasmic nitrate reductase.